Here is an 81-residue protein sequence, read N- to C-terminus: MGGISIWQLLIVALIVILLFGTKKLRSLGGDLGGAVKGFKNAMTPEDENKSLDDKEKDQTAATSQQAAEKQPETESKDKQA.

A helical transmembrane segment spans residues 1-21 (MGGISIWQLLIVALIVILLFG). A disordered region spans residues 34–81 (GAVKGFKNAMTPEDENKSLDDKEKDQTAATSQQAAEKQPETESKDKQA). 2 stretches are compositionally biased toward basic and acidic residues: residues 47 to 59 (DENK…EKDQ) and 70 to 81 (KQPETESKDKQA).

This sequence belongs to the TatA/E family. As to quaternary structure, the Tat system comprises two distinct complexes: a TatABC complex, containing multiple copies of TatA, TatB and TatC subunits, and a separate TatA complex, containing only TatA subunits. Substrates initially bind to the TatABC complex, which probably triggers association of the separate TatA complex to form the active translocon.

Its subcellular location is the cell inner membrane. Functionally, part of the twin-arginine translocation (Tat) system that transports large folded proteins containing a characteristic twin-arginine motif in their signal peptide across membranes. TatA could form the protein-conducting channel of the Tat system. This chain is Sec-independent protein translocase protein TatA, found in Shewanella frigidimarina (strain NCIMB 400).